A 1407-amino-acid chain; its full sequence is DNA-directed RNA polymerase subunit beta' (1407 aa).

4 residues coordinate Zn(2+): C70, C72, C85, and C88. Residues D460, D462, and D464 each coordinate Mg(2+). Zn(2+)-binding residues include C814, C888, C895, and C898.

It belongs to the RNA polymerase beta' chain family. In terms of assembly, the RNAP catalytic core consists of 2 alpha, 1 beta, 1 beta' and 1 omega subunit. When a sigma factor is associated with the core the holoenzyme is formed, which can initiate transcription. Mg(2+) serves as cofactor. The cofactor is Zn(2+).

The enzyme catalyses RNA(n) + a ribonucleoside 5'-triphosphate = RNA(n+1) + diphosphate. Its function is as follows. DNA-dependent RNA polymerase catalyzes the transcription of DNA into RNA using the four ribonucleoside triphosphates as substrates. The sequence is that of DNA-directed RNA polymerase subunit beta' from Salmonella arizonae (strain ATCC BAA-731 / CDC346-86 / RSK2980).